The sequence spans 426 residues: Protein EARLY STARVATION 1, chloroplastic (426 aa).

The N-terminal 58 residues, 1–58 (MSEMAASSAISLLDIKLRRFGVGASNHELRLTKWFKGDQAGAPTRRFTCFADMLAPIR), are a transit peptide targeting the chloroplast. Disordered regions lie at residues 106–127 (CTPR…TGIA) and 396–426 (QPRE…DQPQ). A compositionally biased stretch (basic and acidic residues) spans 118–127 (TPPKRDTGIA). A compositionally biased stretch (pro residues) spans 412 to 426 (PSPPPEPDLPPDQPQ).

This sequence belongs to the ESV1 family.

It localises to the plastid. The protein localises to the chloroplast stroma. Its subcellular location is the plastid stroma. In terms of biological role, binds preferentially to highly ordered alpha-glucans, such as starch and crystalline maltodextrins. Involved in the organization of the starch granule matrix, thus influencing starch turnover by modulating the accessibility of starch polymers to modifying and degrading enzymes involved in phosphorylation, hydrolyzes and synthesis, including starch synthases (SSI and SSIII), starch phosphorylases (PHS1), isoamylase, beta-amylase, glucan water dikinase (GWD) and phosphoglucan water dikinase (PWD). Prevents GWD- and PWD-mediated starch phosphorylation, and subsequent degradation. Required for the control of starch degradation in leaves and starch distribution in nonphotosynthetic parts (e.g. cells immediately adjacent to veins, columella cells of root caps, stems, flowers and siliques) by limiting the hasty depletion of starch reserves during the night. Promotes gravitropic responses, negative in shoots but positive in roots, by maintaining starch granules (statoliths) accumulation in hypocotyls and roots columella, especially in dark conditions and in the endodermis, where starch is formed from transported glucose-6-phosphates. This is Protein EARLY STARVATION 1, chloroplastic from Arabidopsis thaliana (Mouse-ear cress).